The sequence spans 238 residues: Ribosomal RNA small subunit methyltransferase G (238 aa).

S-adenosyl-L-methionine is bound by residues Gly-77, Phe-82, 128-129 (AE), and Arg-147.

Belongs to the methyltransferase superfamily. RNA methyltransferase RsmG family.

It localises to the cytoplasm. In terms of biological role, specifically methylates the N7 position of guanine in position 535 of 16S rRNA. The polypeptide is Ribosomal RNA small subunit methyltransferase G (Listeria monocytogenes serotype 4b (strain F2365)).